Here is a 286-residue protein sequence, read N- to C-terminus: Polyamine aminopropyltransferase (286 aa).

In terms of domain architecture, PABS spans Thr5 to Asp238. Gln33 contacts S-methyl-5'-thioadenosine. The spermidine site is built by His64 and Asp88. S-methyl-5'-thioadenosine is bound by residues Glu108 and Asp140 to Gly141. Catalysis depends on Asp158, which acts as the Proton acceptor. Spermidine is bound at residue Asp158 to Asp161. Pro165 contacts S-methyl-5'-thioadenosine.

It belongs to the spermidine/spermine synthase family. As to quaternary structure, homodimer or homotetramer.

Its subcellular location is the cytoplasm. The enzyme catalyses S-adenosyl 3-(methylsulfanyl)propylamine + putrescine = S-methyl-5'-thioadenosine + spermidine + H(+). The protein operates within amine and polyamine biosynthesis; spermidine biosynthesis; spermidine from putrescine: step 1/1. Its function is as follows. Catalyzes the irreversible transfer of a propylamine group from the amino donor S-adenosylmethioninamine (decarboxy-AdoMet) to putrescine (1,4-diaminobutane) to yield spermidine. This Salmonella newport (strain SL254) protein is Polyamine aminopropyltransferase.